We begin with the raw amino-acid sequence, 493 residues long: Probable cytochrome P450 6a13 (493 aa).

Residue cysteine 435 participates in heme binding.

It belongs to the cytochrome P450 family. The cofactor is heme.

The protein resides in the endoplasmic reticulum membrane. Its subcellular location is the microsome membrane. May be involved in the metabolism of insect hormones and in the breakdown of synthetic insecticides. This Drosophila melanogaster (Fruit fly) protein is Probable cytochrome P450 6a13 (Cyp6a13).